The chain runs to 330 residues: Adenylate isopentenyltransferase 8, chloroplastic (330 aa).

A chloroplast-targeting transit peptide spans 1 to 35 (MQNLTSTFVSPSMIPITSPRLRLPPPRSVVPMTTV). 50 to 57 (GATGSGKS) is a binding site for ATP.

This sequence belongs to the IPP transferase family. In terms of tissue distribution, expressed in roots and in immature seeds with highest expression in the chalazal endosperm.

The protein localises to the plastid. Its subcellular location is the chloroplast. It catalyses the reaction dimethylallyl diphosphate + ADP = N(6)-(dimethylallyl)adenosine 5'-diphosphate + diphosphate. The enzyme catalyses dimethylallyl diphosphate + ATP = N(6)-(dimethylallyl)adenosine 5'-triphosphate + diphosphate. Involved in cytokinin biosynthesis. Catalyzes the transfer of an isopentenyl group from dimethylallyl diphosphate (DMAPP) to ATP and ADP. This is Adenylate isopentenyltransferase 8, chloroplastic (IPT8) from Arabidopsis thaliana (Mouse-ear cress).